Here is a 227-residue protein sequence, read N- to C-terminus: MDSDTPPLIVDIDGTLTDESRALDPHVIPVLREWPARVVIATGKAMPFPIALCEFLGLDRTVVAENGGVVFVEATDELRLEGDHEAALAVGESYRDLGHDLGFGQIDLANRWRETELVVSLDQPLEPLEELAAARGLVVLDTGFAYHVTDPVVDKGTGLEAVCSELDLDPAEFLAVGDSVNDAQMFDLAGEAVAVANADETALERADRVTDASYGDGFLEAVAPYRD.

Asp-11 (nucleophile) is an active-site residue. Asp-11 and Asp-13 together coordinate Mg(2+). Lys-155 is a substrate binding site. Residues Asp-178 and Asp-182 each contribute to the Mg(2+) site.

Belongs to the archaeal SPP-like hydrolase family. Mg(2+) serves as cofactor.

The catalysed reaction is 2-phosphoglycolate + H2O = glycolate + phosphate. In terms of biological role, catalyzes the dephosphorylation of 2-phosphoglycolate. This is Phosphoglycolate phosphatase from Haloarcula marismortui (strain ATCC 43049 / DSM 3752 / JCM 8966 / VKM B-1809) (Halobacterium marismortui).